Consider the following 678-residue polypeptide: Zinc finger translocation-associated protein (678 aa).

Disordered stretches follow at residues 1–100 (MEPG…PGRD), 182–250 (LGVQ…GSRG), 329–417 (QPEA…HRRH), and 490–583 (LGPP…NYQP). Positions 62 to 78 (SAPLPSSRARGPASSGR) are enriched in low complexity. Residues 79–88 (KYSDHCEARA) are compositionally biased toward basic and acidic residues. Positions 187-201 (AEEEEEEEEEEEEEG) are enriched in acidic residues. Lys-375 is covalently cross-linked (Glycyl lysine isopeptide (Lys-Gly) (interchain with G-Cter in SUMO2)). Over residues 388 to 398 (AEEEEELEEGE) the composition is skewed to acidic residues. Pro residues predominate over residues 492–504 (PPRPESPQGPIPP). 2 stretches are compositionally biased toward acidic residues: residues 513-529 (GGGDEEEEPEEEEEEWG) and 543-553 (AEEEEDEEDGQ). Residues 560-572 (LPPPPPPPPPPPP) show a composition bias toward pro residues. The span at 573 to 583 (RSREQRRNYQP) shows a compositional bias: basic and acidic residues.

This Homo sapiens (Human) protein is Zinc finger translocation-associated protein.